The sequence spans 185 residues: Ribosome-recycling factor (185 aa).

Belongs to the RRF family.

It localises to the cytoplasm. Functionally, responsible for the release of ribosomes from messenger RNA at the termination of protein biosynthesis. May increase the efficiency of translation by recycling ribosomes from one round of translation to another. This Shewanella sp. (strain W3-18-1) protein is Ribosome-recycling factor.